The primary structure comprises 411 residues: Argininosuccinate synthase (411 aa).

Residues 10-18 (AYSGGLDTS) and Ala-37 each bind ATP. L-citrulline contacts are provided by Tyr-89 and Ser-94. Residue Gly-119 participates in ATP binding. L-aspartate is bound by residues Thr-121, Asn-125, and Asp-126. Asn-125 lines the L-citrulline pocket. 5 residues coordinate L-citrulline: Arg-129, Ser-178, Ser-187, Glu-263, and Tyr-275.

Belongs to the argininosuccinate synthase family. Type 1 subfamily. Homotetramer.

The protein resides in the cytoplasm. It carries out the reaction L-citrulline + L-aspartate + ATP = 2-(N(omega)-L-arginino)succinate + AMP + diphosphate + H(+). The protein operates within amino-acid biosynthesis; L-arginine biosynthesis; L-arginine from L-ornithine and carbamoyl phosphate: step 2/3. The polypeptide is Argininosuccinate synthase (Aeromonas hydrophila subsp. hydrophila (strain ATCC 7966 / DSM 30187 / BCRC 13018 / CCUG 14551 / JCM 1027 / KCTC 2358 / NCIMB 9240 / NCTC 8049)).